Consider the following 837-residue polypeptide: Protein translocase subunit SecA (837 aa).

Residues Gln87, 105 to 109 (GEGKT), and Asp494 each bind ATP. Residues 788–837 (HKESKSDLEYSDSENTETKKKPKRRSEPKVGRNDPCPCGSGKKYKKCCGK) form a disordered region. Positions 823, 825, 834, and 835 each coordinate Zn(2+).

This sequence belongs to the SecA family. In terms of assembly, monomer and homodimer. Part of the essential Sec protein translocation apparatus which comprises SecA, SecYEG and auxiliary proteins SecDF-YajC and YidC. Zn(2+) is required as a cofactor.

The protein resides in the cell inner membrane. It localises to the cytoplasm. It catalyses the reaction ATP + H2O + cellular proteinSide 1 = ADP + phosphate + cellular proteinSide 2.. In terms of biological role, part of the Sec protein translocase complex. Interacts with the SecYEG preprotein conducting channel. Has a central role in coupling the hydrolysis of ATP to the transfer of proteins into and across the cell membrane, serving as an ATP-driven molecular motor driving the stepwise translocation of polypeptide chains across the membrane. In Maridesulfovibrio salexigens (strain ATCC 14822 / DSM 2638 / NCIMB 8403 / VKM B-1763) (Desulfovibrio salexigens), this protein is Protein translocase subunit SecA.